Here is a 395-residue protein sequence, read N- to C-terminus: LIM/homeobox protein Lhx3 (395 aa).

LIM zinc-binding domains follow at residues 28–78 and 87–141; these read CAGC…CKED and CAAC…CKAD. Residues 154–213 constitute a DNA-binding region (homeobox); that stretch reads AKRPRTTITAKQLETLKNAYNNSPKPARHVREQLSSETGLDMRVVQVWFQNRRAKEKRLK. 2 disordered regions span residues 209-325 and 348-395; these read EKRL…LQAL and GGQG…HAQF. Polar residues predominate over residues 257–276; that stretch reads DEPSMSEMSHSNGIYSNLSE.

It is found in the nucleus. In terms of biological role, transcription factor. Defines subclasses of motoneurons that segregate into columns in the spinal cord and select distinct axon pathways. Acts in conjunction with LIM-1, ISL-1 and ISL-2. This is LIM/homeobox protein Lhx3 (LHX3) from Gallus gallus (Chicken).